The sequence spans 144 residues: Neuritin-A (144 aa).

Positions 1 to 27 (MGLKLSGRYIFLVLAVHLAYLLQAVKA) are cleaved as a signal peptide. Ser114 carries the GPI-anchor amidated serine lipid modification. The propeptide at 115 to 144 (AGAPGQRLLFPAFLPLLMVFLSTLFILVLQ) is removed in mature form.

Belongs to the neuritin family. Expressed in sensory regions of the brain including the visual, auditory and olfactory systems. Within the retina, only expressed in the retinal ganglion cells. Concentrated in axon tracts including retinal axons.

It is found in the cell membrane. Its function is as follows. Modulates postsynaptic dendritic arbor elaboration and synaptic maturation. The polypeptide is Neuritin-A (nrn1-a) (Xenopus laevis (African clawed frog)).